Consider the following 222-residue polypeptide: UPF0758 protein TM_1557 (222 aa).

The MPN domain occupies 101-222; it reads KLDSSVKVYK…YFSFREEGEL (122 aa). The Zn(2+) site is built by His171, His173, and Asp184. A JAMM motif motif is present at residues 171-184; that stretch reads HNHPSGDPTPSKED.

This sequence belongs to the UPF0758 family.

The protein is UPF0758 protein TM_1557 of Thermotoga maritima (strain ATCC 43589 / DSM 3109 / JCM 10099 / NBRC 100826 / MSB8).